Here is a 927-residue protein sequence, read N- to C-terminus: Band 3 anion transport protein (927 aa).

N-acetylmethionine is present on Met1. The Cytoplasmic segment spans residues 1–420; it reads MGDMQDHEKV…LSDITDALSP (420 aa). Position 18 is a phosphoserine (Ser18). 2 positions are modified to phosphotyrosine: Tyr31 and Tyr56. A globular region spans residues 69–303; the sequence is SQVYVELQEL…LGRAAATLMT (235 aa). The interval 190-199 is interaction with ANK1; the sequence is AVLTRSGAPS. Ser199 and Ser222 each carry phosphoserine. The interval 317–370 is dimerization arm; it reads RGELLSSLDSFLDCSLVLPPTEAPSEKALLNLVPVQKELLRKRYLPRPAKPDPN. The interval 367–390 is disordered; that stretch reads PDPNLYEALDGGKEGPGDEDDPLR. Phosphotyrosine is present on Tyr372. Residues 421–444 traverse the membrane as a helical segment; the sequence is QVLAAVIFIYFAALSPAVTFGGLL. Over 445 to 452 the chain is Extracellular; it reads GEKTRNLM. The chain crosses the membrane as a helical span at residues 453 to 473; it reads GVSELLISTAVQGILFALLGA. The Cytoplasmic segment spans residues 474 to 476; it reads QPL. A discontinuously helical membrane pass occupies residues 477–493; it reads LVLGFSGPLLVFEEAFY. The Extracellular portion of the chain corresponds to 494 to 502; the sequence is SFCESNNLE. The chain crosses the membrane as a helical span at residues 503 to 523; sequence YIVGRAWIGFWLILLVVLVVA. The Cytoplasmic segment spans residues 524–535; sequence FEGSFLVQYISR. The chain crosses the membrane as a helical span at residues 536-558; that stretch reads YTQEIFSFLISLIFIYETFSKLI. The Extracellular segment spans residues 559-586; it reads KIFQDYPLQESYAPVVMKPKPQGPVPNT. Residues 587-607 form a helical membrane-spanning segment; that stretch reads ALLSLVLMVGTFLLAMMLRKF. The Cytoplasmic segment spans residues 608-618; that stretch reads KNSTYFPGKLR. A helical transmembrane segment spans residues 619–639; the sequence is RVIGDFGVPISILIMVLVDTF. The Extracellular segment spans residues 640 to 679; that stretch reads IKNTYTQKLSVPDGLKVSNSSARGWVIHPLGLYNHFPKWM. The N-linked (GlcNAc...) asparagine glycan is linked to Asn658. The helical transmembrane segment at 680–700 threads the bilayer; sequence MFASVLPALLVFILIFLESQI. At 701-716 the chain is on the cytoplasmic side; sequence TTLIVSKPERKMIKGS. Residues 717-735 form a helical membrane-spanning segment; the sequence is GFHLDLLLVVGMGGVAALF. A discontinuously helical membrane pass occupies residues 736–753; sequence GMPWLSATTVRSVTHANA. Over 754-776 the chain is Cytoplasmic; sequence LTVMGKASGPGAAAQIQEVKEQR. The next 2 membrane-spanning stretches (helical) occupy residues 777–797 and 798–816; these read ISGLLVSVLVGLSILMEPILS and RIPLAVLFGIFLYMGITSL. The Cytoplasmic segment spans residues 817-854; it reads SGIQLFDRILLLFKPPKYHPDVPFVKRVKTWRMHLFTG. An intramembrane region (discontinuously helical) is located at residues 855 to 885; it reads IQIICLAVLWVVKSTPASLALPFVLILTVPL. Residue Cys859 is the site of S-palmitoyl cysteine attachment. Residues 886-927 lie on the Cytoplasmic side of the membrane; that stretch reads RRLLLPLIFRELELQCLDGDDAKVTFDEAEGLDEYDEVPMPV. Tyr920 bears the Phosphotyrosine mark.

The protein belongs to the anion exchanger (TC 2.A.31) family. As to quaternary structure, a dimer in solution, but in its membrane environment, it exists primarily as a mixture of dimers and tetramers and spans the membrane asymmetrically. Component of the ankyrin-1 complex in the erythrocyte, composed of ANK1, RHCE, RHAG, SLC4A1, EPB42, GYPA, GYPB and AQP1. Interacts with STOM; this interaction positively regulates SLC4A1 activity. Interacts with GYPA; a GYPA monomer is bound at each end of the SLC4A1 dimer forming a heterotetramer. Three SLC4A1 dimers (Band 3-I, Band 3-II and Band 3-III) participates in the ankyrin-1 complex. Interacts (via the cytoplasmic domain) with EPB42; this interaction is mediated by the SLC4A1 Band 3-I dimer. Interacts (via the cytoplasmic domain) directly with ANK1; this interaction is mediated by the SLC4A1 Band 3-II and Band 3-III dimers. In terms of assembly, interacts with TMEM139. As to expression, kidney.

It localises to the cell membrane. It is found in the basolateral cell membrane. It carries out the reaction hydrogencarbonate(in) + chloride(out) = hydrogencarbonate(out) + chloride(in). Its function is as follows. Functions both as a transporter that mediates electroneutral anion exchange across the cell membrane and as a structural protein. Component of the ankyrin-1 complex of the erythrocyte membrane; required for normal flexibility and stability of the erythrocyte membrane and for normal erythrocyte shape via the interactions of its cytoplasmic domain with cytoskeletal proteins, glycolytic enzymes, and hemoglobin. Functions as a transporter that mediates the 1:1 exchange of inorganic anions across the erythrocyte membrane. Mediates chloride-bicarbonate exchange in the kidney, and is required for normal acidification of the urine. The protein is Band 3 anion transport protein of Rattus norvegicus (Rat).